Consider the following 225-residue polypeptide: MDCETRGRGRRGRGNRNEESRDVRLSKSLSYVLRHGASKMGLQMNSDGFVFVEELLAHQQFRSFSVDDVERVVASNDKQRFKLCKHPEDDRLQIRANQGHSVQVTDLELREISQDDQDYPREAVHGSYMKHWPSIRSQGLSRMNRTHIHLAPGLPGEGRVISGMRQSCDLAVYIDVTKAMSDGIKFFWSENGVLLTPGDAAGILAPCYFSRAQRLKPLPCDIELH.

The interval 1-21 (MDCETRGRGRRGRGNRNEESR) is disordered.

The protein belongs to the KptA/TPT1 family.

It catalyses the reaction 2'-phospho-[ligated tRNA] + NAD(+) = mature tRNA + ADP-alpha-D-ribose 1'',2''-cyclic phosphate + nicotinamide. Functionally, catalyzes the last step of tRNA splicing, the transfer of the splice junction 2'-phosphate from ligated tRNA to NAD to produce ADP-ribose 1''-2'' cyclic phosphate. The polypeptide is tRNA 2'-phosphotransferase 1 (trpt1) (Danio rerio (Zebrafish)).